Consider the following 307-residue polypeptide: Coproporphyrin III ferrochelatase (307 aa).

Fe-coproporphyrin III is bound by residues tyrosine 12, arginine 29, 45–46 (RY), serine 53, and tyrosine 124. Positions 181 and 263 each coordinate Fe(2+).

This sequence belongs to the ferrochelatase family.

It localises to the cytoplasm. The enzyme catalyses Fe-coproporphyrin III + 2 H(+) = coproporphyrin III + Fe(2+). It functions in the pathway porphyrin-containing compound metabolism; protoheme biosynthesis. Functionally, involved in coproporphyrin-dependent heme b biosynthesis. Catalyzes the insertion of ferrous iron into coproporphyrin III to form Fe-coproporphyrin III. It can also insert iron into protoporphyrin IX, but it has a much stronger preference for coproprophyrin III as the substrate. The protein is Coproporphyrin III ferrochelatase of Staphylococcus aureus (strain NCTC 8325 / PS 47).